A 419-amino-acid polypeptide reads, in one-letter code: Tyrosine--tRNA ligase (419 aa).

Tyr-34 contacts L-tyrosine. A 'HIGH' region motif is present at residues 39–48; it reads PTADSLHLGN. The L-tyrosine site is built by Tyr-169 and Gln-173. Residues 229–233 carry the 'KMSKS' region motif; sequence KFGKS. Lys-232 lines the ATP pocket. In terms of domain architecture, S4 RNA-binding spans 353–419; that stretch reads LTLIELLISV…GKKKNFVLTY (67 aa).

This sequence belongs to the class-I aminoacyl-tRNA synthetase family. TyrS type 1 subfamily. As to quaternary structure, homodimer.

It localises to the cytoplasm. The catalysed reaction is tRNA(Tyr) + L-tyrosine + ATP = L-tyrosyl-tRNA(Tyr) + AMP + diphosphate + H(+). Catalyzes the attachment of tyrosine to tRNA(Tyr) in a two-step reaction: tyrosine is first activated by ATP to form Tyr-AMP and then transferred to the acceptor end of tRNA(Tyr). This Lactococcus lactis subsp. cremoris (strain MG1363) protein is Tyrosine--tRNA ligase.